The sequence spans 312 residues: Ribosomal protein L11 methyltransferase (312 aa).

4 residues coordinate S-adenosyl-L-methionine: Thr-160, Gly-181, Asp-203, and Asn-246.

It belongs to the methyltransferase superfamily. PrmA family.

It localises to the cytoplasm. The enzyme catalyses L-lysyl-[protein] + 3 S-adenosyl-L-methionine = N(6),N(6),N(6)-trimethyl-L-lysyl-[protein] + 3 S-adenosyl-L-homocysteine + 3 H(+). Its function is as follows. Methylates ribosomal protein L11. This Staphylococcus epidermidis (strain ATCC 12228 / FDA PCI 1200) protein is Ribosomal protein L11 methyltransferase.